The following is a 175-amino-acid chain: Alpha-crystallin B chain (175 aa).

Met-1 is subject to N-acetylmethionine. Phosphoserine is present on residues Ser-19, Ser-45, and Ser-59. Residues Arg-56 to Glu-164 form the sHSP domain. Residue His-83 coordinates Zn(2+). Lys-92 carries the N6-acetyllysine modification. Zn(2+)-binding residues include His-104, Glu-106, His-111, and His-119. A disordered region spans residues Val-145–Lys-175. Position 166 is an N6-acetyllysine (Lys-166).

Belongs to the small heat shock protein (HSP20) family. As to quaternary structure, heteromer composed of three CRYAA and one CRYAB subunits. Aggregates with homologous proteins, including the small heat shock protein HSPB1, to form large heteromeric complexes. Inter-subunit bridging via zinc ions enhances stability, which is crucial as there is no protein turn over in the lens. Interacts with HSPBAP1. Interacts with TTN/titin. Interacts with TMEM109; in the cellular response to DNA damage. Interacts with DES; binds rapidly during early stages of DES filament assembly and a reduced binding seen in the later stages. Interacts with TMED10; the interaction mediates the translocation from the cytoplasm into the ERGIC (endoplasmic reticulum-Golgi intermediate compartment) and thereby secretion. Interacts with ATP6V1A and with MTOR, forming a ternary complex. Abundantly expressed in the lens of the eye. Expressed in ventricular cardiomyocytes of the heart. Also expressed in skeletal muscle and the kidney.

The protein resides in the cytoplasm. Its subcellular location is the cytosol. The protein localises to the nucleus. It localises to the secreted. It is found in the lysosome. May contribute to the transparency and refractive index of the lens. Has chaperone-like activity, preventing aggregation of various proteins under a wide range of stress conditions. In lens epithelial cells, stabilizes the ATP6V1A protein, preventing its degradation by the proteasome. The sequence is that of Alpha-crystallin B chain from Mus musculus (Mouse).